A 384-amino-acid polypeptide reads, in one-letter code: Chaperone protein DnaJ (384 aa).

A J domain is found at 5–70; sequence DFYEVLGVSK…DKKAAYDRYG (66 aa). A CR-type zinc finger spans residues 143–221; sequence GAQKTITVPG…CHGSGRIEKE (79 aa). Zn(2+) contacts are provided by Cys156, Cys159, Cys173, Cys176, Cys195, Cys198, Cys209, and Cys212. 4 CXXCXGXG motif repeats span residues 156–163, 173–180, 195–202, and 209–216; these read CGSCNGTG, CPTCSGLG, CPTCGGQG, and CRVCHGSG.

It belongs to the DnaJ family. Homodimer. Zn(2+) serves as cofactor.

It localises to the cytoplasm. Its function is as follows. Participates actively in the response to hyperosmotic and heat shock by preventing the aggregation of stress-denatured proteins and by disaggregating proteins, also in an autonomous, DnaK-independent fashion. Unfolded proteins bind initially to DnaJ; upon interaction with the DnaJ-bound protein, DnaK hydrolyzes its bound ATP, resulting in the formation of a stable complex. GrpE releases ADP from DnaK; ATP binding to DnaK triggers the release of the substrate protein, thus completing the reaction cycle. Several rounds of ATP-dependent interactions between DnaJ, DnaK and GrpE are required for fully efficient folding. Also involved, together with DnaK and GrpE, in the DNA replication of plasmids through activation of initiation proteins. The polypeptide is Chaperone protein DnaJ (Rhodobacter capsulatus (Rhodopseudomonas capsulata)).